Here is a 91-residue protein sequence, read N- to C-terminus: MKPMYRSRSWRRKYVRTPGGRVVIHFERRKPKIAHCAICGRPLNGIPRGRPVEMRKLPKTKKRPERPYPHLCPKCMRRVMKEQVRAQIMKG.

The interval arginine 48–leucine 71 is disordered.

It belongs to the eukaryotic ribosomal protein eL34 family.

This chain is Large ribosomal subunit protein eL34 (rpl34e), found in Pyrococcus abyssi (strain GE5 / Orsay).